A 237-amino-acid chain; its full sequence is Leucyl/phenylalanyl-tRNA--protein transferase (237 aa).

Belongs to the L/F-transferase family.

It localises to the cytoplasm. The enzyme catalyses N-terminal L-lysyl-[protein] + L-leucyl-tRNA(Leu) = N-terminal L-leucyl-L-lysyl-[protein] + tRNA(Leu) + H(+). It carries out the reaction N-terminal L-arginyl-[protein] + L-leucyl-tRNA(Leu) = N-terminal L-leucyl-L-arginyl-[protein] + tRNA(Leu) + H(+). The catalysed reaction is L-phenylalanyl-tRNA(Phe) + an N-terminal L-alpha-aminoacyl-[protein] = an N-terminal L-phenylalanyl-L-alpha-aminoacyl-[protein] + tRNA(Phe). In terms of biological role, functions in the N-end rule pathway of protein degradation where it conjugates Leu, Phe and, less efficiently, Met from aminoacyl-tRNAs to the N-termini of proteins containing an N-terminal arginine or lysine. The polypeptide is Leucyl/phenylalanyl-tRNA--protein transferase (Shewanella baltica (strain OS195)).